A 131-amino-acid chain; its full sequence is Large ribosomal subunit protein uL22 (131 aa).

The span at 1–11 (MAKGHRSKIKR) shows a compositional bias: basic residues. The segment at 1-20 (MAKGHRSKIKRERNEVRDTR) is disordered.

The protein belongs to the universal ribosomal protein uL22 family. In terms of assembly, part of the 50S ribosomal subunit.

Functionally, this protein binds specifically to 23S rRNA; its binding is stimulated by other ribosomal proteins, e.g. L4, L17, and L20. It is important during the early stages of 50S assembly. It makes multiple contacts with different domains of the 23S rRNA in the assembled 50S subunit and ribosome. The globular domain of the protein is located near the polypeptide exit tunnel on the outside of the subunit, while an extended beta-hairpin is found that lines the wall of the exit tunnel in the center of the 70S ribosome. This is Large ribosomal subunit protein uL22 from Agathobacter rectalis (strain ATCC 33656 / DSM 3377 / JCM 17463 / KCTC 5835 / VPI 0990) (Eubacterium rectale).